The primary structure comprises 148 residues: Small ribosomal subunit protein bS16 (148 aa).

The tract at residues 107-148 (AAARAAAGAEDRPATTPKKAKKAASADGADAPAADAPTAAGQ) is disordered. Over residues 129–148 (AASADGADAPAADAPTAAGQ) the composition is skewed to low complexity.

Belongs to the bacterial ribosomal protein bS16 family.

The protein is Small ribosomal subunit protein bS16 of Frankia alni (strain DSM 45986 / CECT 9034 / ACN14a).